The sequence spans 491 residues: MEQPPAPKSKLKKLSEDSLTKQPEEVFDVLEKLGEGSYGSVFKAIHKESGQVVAIKQVPVESDVQEIIKEISIMQQCDSPYVVKYYGSYFKNTDLWIVMEYCGAGSVSDIIRLRNKTLTEDEIATILKSTLKGLEYLHFMRKIHRDIKAGNILLNTEGHAKLADFGVAGQLTDTMAKRNTVIGTPFWMAPEVIQEIGYNCVADIWSLGITSIEMAEGKPPYADIHPMRAIFMIPTNPPPTFRKPELWSDDFTDFVKKCLVKSPEQRATATQLLQHPFIKNAKPVSILRELITEGMEIKAKRHEEQQRELEDEEENSDEDELDSHTMVKTSSEGVGTMRATSTMSEGAQTMIEHNSTMLESDLGTMVINSEDEEEEDGTMKRNATSPQVQRPSFMDYFDKQDFKNKSHENCDQSMREPCPMSNNVFPDNWRVPQDGDFDFLKNLSLEELQMRLKALDPMMEREIEELHQRYSAKRQPILDAMDAKKRRQQNF.

An N-acetylmethionine modification is found at methionine 1. Serine 15 carries the phosphoserine modification. One can recognise a Protein kinase domain in the interval 27–278; the sequence is FDVLEKLGEG…ATQLLQHPFI (252 aa). ATP-binding positions include 33 to 41 and lysine 56; that span reads LGEGSYGSV. Position 117 is a phosphothreonine; by PKB/AKT1 (threonine 117). Aspartate 146 (proton acceptor) is an active-site residue. Mg(2+)-binding residues include asparagine 151 and aspartate 164. Threonine 180 is modified (phosphothreonine; by autocatalysis). A coiled-coil region spans residues 291-324; sequence ITEGMEIKAKRHEEQQRELEDEEENSDEDELDSH. Disordered regions lie at residues 301 to 343 and 370 to 392; these read RHEE…TSTM and EDEE…QRPS. Positions 309-321 are enriched in acidic residues; it reads LEDEEENSDEDEL. Serine 316 is modified (phosphoserine). Residues 326-343 show a composition bias toward polar residues; that stretch reads MVKTSSEGVGTMRATSTM. Phosphothreonine is present on residues threonine 336 and threonine 378. Positions 381–390 are enriched in polar residues; that stretch reads RNATSPQVQR. Threonine 384 is modified (phosphothreonine; by PKB/AKT1). Phosphoserine is present on residues serine 385 and serine 444. The SARAH domain maps to 437–484; it reads FDFLKNLSLEELQMRLKALDPMMEREIEELHQRYSAKRQPILDAMDAK.

This sequence belongs to the protein kinase superfamily. STE Ser/Thr protein kinase family. STE20 subfamily. In terms of assembly, homodimer; mediated via the coiled-coil region. Interacts with NORE1, which inhibits autoactivation. Interacts with and stabilizes SAV1. Interacts with RAF1, which prevents dimerization and phosphorylation. Interacts with RASSF1. Interacts (via SARAH domain) with isoform 1 of NEK2. Interacts with ESR1 only in the presence of SAV1. Interacts with PKB/AKT1. Forms a tripartite complex with MOBKL1B and STK38. Interacts with RASSF2 (via SARAH domain). Interacts with DLG5 (via PDZ domain 3). Interacts with LATS1; this interaction is inhibited in the presence of DLG5. Interacts with MARK3 in the presence of DLG5. Interacts with RASSF5; this interaction inhibits STK3 autoactivation through heterodimerization. Interacts (when phosphorylated) with SLMAP (via FHA domain); the interaction associates STK3 with the STRIPAK complex. Mg(2+) is required as a cofactor. Autophosphorylated on two residues Thr-174 and Thr-180, leading to activation. Phosphorylation at Thr-117 and Thr-384 by PKB/AKT1, leads to inhibition of its: cleavage, kinase activity, autophosphorylation at Thr-180, binding to RASSF1 and nuclear translocation, and increase in its binding to RAF1. Phosphorylated at Ser-15 by PLK1, leading to activation. Post-translationally, proteolytically cleaved by caspase-3 during apoptosis. Proteolytic cleavage results in kinase activation and nuclear translocation of the truncated form (MST1/N). In terms of processing, ubiquitinated by TRIM69; leading to its redistribution to the perinuclear cytoskeleton.

Its subcellular location is the cytoplasm. The protein resides in the nucleus. The catalysed reaction is L-seryl-[protein] + ATP = O-phospho-L-seryl-[protein] + ADP + H(+). The enzyme catalyses L-threonyl-[protein] + ATP = O-phospho-L-threonyl-[protein] + ADP + H(+). Its activity is regulated as follows. Inhibited by the C-terminal non-catalytic region. Activated by caspase-cleavage. Full activation also requires homodimerization and autophosphorylation of Thr-180, which are inhibited by the proto-oncogene product RAF1. Activated by RASSF1 which acts by preventing its dephosphorylation. When autophosphorylated at Thr-180, recruits STRIPAK complex and promotes PP2A-mediated dephosphorylation and inactivation of STK3. Stress-activated, pro-apoptotic kinase which, following caspase-cleavage, enters the nucleus and induces chromatin condensation followed by internucleosomal DNA fragmentation. Key component of the Hippo signaling pathway which plays a pivotal role in organ size control and tumor suppression by restricting proliferation and promoting apoptosis. The core of this pathway is composed of a kinase cascade wherein STK3/MST2 and STK4/MST1, in complex with its regulatory protein SAV1, phosphorylates and activates LATS1/2 in complex with its regulatory protein MOB1, which in turn phosphorylates and inactivates YAP1 oncoprotein and WWTR1/TAZ. Phosphorylation of YAP1 by LATS2 inhibits its translocation into the nucleus to regulate cellular genes important for cell proliferation, cell death, and cell migration. STK3/MST2 and STK4/MST1 are required to repress proliferation of mature hepatocytes, to prevent activation of facultative adult liver stem cells (oval cells), and to inhibit tumor formation. Phosphorylates NKX2-1. Phosphorylates NEK2 and plays a role in centrosome disjunction by regulating the localization of NEK2 to centrosomes, and its ability to phosphorylate CROCC and CEP250. In conjunction with SAV1, activates the transcriptional activity of ESR1 through the modulation of its phosphorylation. Positively regulates RAF1 activation via suppression of the inhibitory phosphorylation of RAF1 on 'Ser-259'. Phosphorylates MOBKL1A and RASSF2. Phosphorylates MOBKL1B on 'Thr-74'. Acts cooperatively with MOBKL1B to activate STK38. The protein is Serine/threonine-protein kinase 3 (Stk3) of Rattus norvegicus (Rat).